We begin with the raw amino-acid sequence, 96 residues long: Co-chaperonin GroES (96 aa).

This sequence belongs to the GroES chaperonin family. Heptamer of 7 subunits arranged in a ring. Interacts with the chaperonin GroEL.

It is found in the cytoplasm. In terms of biological role, together with the chaperonin GroEL, plays an essential role in assisting protein folding. The GroEL-GroES system forms a nano-cage that allows encapsulation of the non-native substrate proteins and provides a physical environment optimized to promote and accelerate protein folding. GroES binds to the apical surface of the GroEL ring, thereby capping the opening of the GroEL channel. The protein is Co-chaperonin GroES of Legionella micdadei (Tatlockia micdadei).